Reading from the N-terminus, the 437-residue chain is Trigger factor (437 aa).

The PPIase FKBP-type domain maps to 174-260 (GDFVQISFEG…VKSLKKKIFP (87 aa)).

This sequence belongs to the FKBP-type PPIase family. Tig subfamily.

It is found in the cytoplasm. The catalysed reaction is [protein]-peptidylproline (omega=180) = [protein]-peptidylproline (omega=0). In terms of biological role, involved in protein export. Acts as a chaperone by maintaining the newly synthesized protein in an open conformation. Functions as a peptidyl-prolyl cis-trans isomerase. The chain is Trigger factor from Koribacter versatilis (strain Ellin345).